The following is a 3658-amino-acid chain: Serine/threonine-protein kinase SMG1 (3658 aa).

Disordered stretches follow at residues methionine 1 to arginine 99 and phenylalanine 116 to serine 142. Over residues asparagine 24–alanine 33 the composition is skewed to polar residues. Composition is skewed to basic and acidic residues over residues glutamine 67–glycine 84 and alanine 127–glutamate 136. At lysine 171 the chain carries N6-acetyllysine. The FAT domain occupies arginine 1281–serine 1864. Residues alanine 1815–serine 1850 form an HEAT repeat. The segment at glutamate 1896 to leucine 1917 is disordered. In terms of domain architecture, PI3K/PI4K catalytic spans valine 2122–phenylalanine 2461. Residues isoleucine 2128–lysine 2134 form a G-loop region. A catalytic loop region spans residues glycine 2330–asparagine 2338. The activation loop stretch occupies residues histidine 2350–threonine 2374. Threonine 3547 bears the Phosphothreonine mark. Phosphoserine occurs at positions 3553 and 3567. Over residues alanine 3565–proline 3576 the composition is skewed to polar residues. The tract at residues alanine 3565 to lysine 3588 is disordered. Phosphothreonine occurs at positions 3570 and 3574. The FATC domain occupies arginine 3626 to valine 3658.

This sequence belongs to the PI3/PI4-kinase family. Component of the SMG1C complex composed of SMG1, SMG8 and SMG9; the recruitment of SMG8 to SMG1 N-terminus induces a large conformational change in the SMG1 C-terminal head domain containing the catalytic domain. Component of the transient SURF (SMG1-UPF1-eRF1-eRF3) complex. Part of a complex composed of SMG1, DHX34 and UPF1; within the complex DHX34 acts as a scaffolding protein to facilitate SMG1 phosphorylation of UPF1. Interacts with PRKCI. Interacts with TELO2 and TTI1. Interacts with RUVBL1 and RUVBL2. Interacts with DHX34 (via C-terminus); the interaction is RNA-independent. The cofactor is Mn(2+). Autophosphorylated.

The protein localises to the nucleus. The protein resides in the cytoplasm. The enzyme catalyses L-seryl-[protein] + ATP = O-phospho-L-seryl-[protein] + ADP + H(+). The catalysed reaction is L-threonyl-[protein] + ATP = O-phospho-L-threonyl-[protein] + ADP + H(+). With respect to regulation, inhibited by caffeine, LY294002 and wortmannin. Serine/threonine protein kinase involved in both mRNA surveillance and genotoxic stress response pathways. Recognizes the substrate consensus sequence [ST]-Q. Plays a central role in nonsense-mediated decay (NMD) of mRNAs containing premature stop codons by phosphorylating UPF1/RENT1. Recruited by release factors to stalled ribosomes together with SMG8 and SMG9 (forming the SMG1C protein kinase complex), and UPF1 to form the transient SURF (SMG1-UPF1-eRF1-eRF3) complex. In EJC-dependent NMD, the SURF complex associates with the exon junction complex (EJC) through UPF2 and allows the formation of an UPF1-UPF2-UPF3 surveillance complex which is believed to activate NMD. Also acts as a genotoxic stress-activated protein kinase that displays some functional overlap with ATM. Can phosphorylate p53/TP53 and is required for optimal p53/TP53 activation after cellular exposure to genotoxic stress. Its depletion leads to spontaneous DNA damage and increased sensitivity to ionizing radiation (IR). May activate PRKCI but not PRKCZ. The sequence is that of Serine/threonine-protein kinase SMG1 from Mus musculus (Mouse).